We begin with the raw amino-acid sequence, 116 residues long: Large ribosomal subunit protein bL19 (116 aa).

It belongs to the bacterial ribosomal protein bL19 family.

Its function is as follows. This protein is located at the 30S-50S ribosomal subunit interface and may play a role in the structure and function of the aminoacyl-tRNA binding site. This chain is Large ribosomal subunit protein bL19, found in Staphylococcus aureus (strain USA300).